The chain runs to 382 residues: Fetuin-B (382 aa).

The N-terminal stretch at Met-1–Cys-15 is a signal peptide. 2 consecutive Cystatin fetuin-B-type domains span residues Ala-25–Thr-138 and Met-149–Asp-255. Asn-37 carries N-linked (GlcNAc...) asparagine glycosylation. Intrachain disulfides connect Cys-93–Cys-104, Cys-117–Cys-137, and Cys-151–Cys-154. N-linked (GlcNAc...) asparagine glycosylation is present at Asn-136. N-linked (GlcNAc...) asparagine glycosylation occurs at Asn-182. 2 cysteine pairs are disulfide-bonded: Cys-216–Cys-224 and Cys-237–Cys-254. 2 stretches are compositionally biased toward polar residues: residues Pro-262 to Thr-276 and Gln-286 to Pro-295. 2 disordered regions span residues Pro-262–Pro-320 and Ala-363–Pro-382. Residues Thr-289 and Thr-292 are each glycosylated (O-linked (GalNAc...) threonine). Residues Leu-310–Pro-320 show a composition bias toward basic and acidic residues. A Phosphoserine modification is found at Ser-315.

Belongs to the fetuin family. Liver and testis.

It localises to the secreted. Protease inhibitor required for egg fertilization. Required to prevent premature zona pellucida hardening before fertilization, probably by inhibiting the protease activity of ASTL, a protease that mediates the cleavage of ZP2 and triggers zona pellucida hardening. The polypeptide is Fetuin-B (FETUB) (Homo sapiens (Human)).